The primary structure comprises 570 residues: Methionine--tRNA ligase (570 aa).

The 'HIGH' region motif lies at 14 to 24; sequence PYINGIKHLGN. Positions 146, 149, 159, and 162 each coordinate Zn(2+). The short motif at 347–351 is the 'KMSKS' region element; the sequence is QFSTS. T350 serves as a coordination point for ATP.

This sequence belongs to the class-I aminoacyl-tRNA synthetase family. MetG type 1 subfamily. In terms of assembly, monomer. Zn(2+) is required as a cofactor.

Its subcellular location is the cytoplasm. It catalyses the reaction tRNA(Met) + L-methionine + ATP = L-methionyl-tRNA(Met) + AMP + diphosphate. Is required not only for elongation of protein synthesis but also for the initiation of all mRNA translation through initiator tRNA(fMet) aminoacylation. In Jannaschia sp. (strain CCS1), this protein is Methionine--tRNA ligase.